A 154-amino-acid chain; its full sequence is Histone H2B.5 (154 aa).

A compositionally biased stretch (basic and acidic residues) spans 1–25 (MAPKAEKKPAAKKVAEEEPSEKAAP). The disordered stretch occupies residues 1–62 (MAPKAEKKPA…DKKGRKKAKK (62 aa)). Residues lysine 7 and lysine 39 each carry the N6-acetyllysine modification. Lysine 150 participates in a covalent cross-link: Glycyl lysine isopeptide (Lys-Gly) (interchain with G-Cter in ubiquitin).

This sequence belongs to the histone H2B family. As to quaternary structure, the nucleosome is a histone octamer containing two molecules each of H2A, H2B, H3 and H4 assembled in one H3-H4 heterotetramer and two H2A-H2B heterodimers. The octamer wraps approximately 147 bp of DNA. Can be acetylated to form H2BK6ac and H2BK33ac. Post-translationally, monoubiquitinated to form H2BK143ub1; may give a specific tag for epigenetic transcriptional activation.

It localises to the nucleus. Its subcellular location is the chromosome. Functionally, core component of nucleosome. Nucleosomes wrap and compact DNA into chromatin, limiting DNA accessibility to the cellular machineries which require DNA as a template. Histones thereby play a central role in transcription regulation, DNA repair, DNA replication and chromosomal stability. DNA accessibility is regulated via a complex set of post-translational modifications of histones, also called histone code, and nucleosome remodeling. The polypeptide is Histone H2B.5 (Zea mays (Maize)).